A 321-amino-acid chain; its full sequence is Probable pectate lyase A (321 aa).

An N-terminal signal peptide occupies residues 1-18 (MKFVATLIACGLSGLALA). N-linked (GlcNAc...) asparagine glycosylation is present at N93. The Ca(2+) site is built by D134, D163, and D167. The active site involves R220. A glycan (N-linked (GlcNAc...) asparagine) is linked at N238.

Belongs to the polysaccharide lyase 1 family. Ca(2+) serves as cofactor.

It is found in the secreted. It carries out the reaction Eliminative cleavage of (1-&gt;4)-alpha-D-galacturonan to give oligosaccharides with 4-deoxy-alpha-D-galact-4-enuronosyl groups at their non-reducing ends.. Its function is as follows. Pectinolytic enzyme consist of four classes of enzymes: pectin lyase, polygalacturonase, pectin methylesterase and rhamnogalacturonase. Among pectinolytic enzymes, pectin lyase is the most important in depolymerization of pectin, since it cleaves internal glycosidic bonds of highly methylated pectins. Favors pectate, the anion, over pectin, the methyl ester. This is Probable pectate lyase A (plyA) from Neosartorya fischeri (strain ATCC 1020 / DSM 3700 / CBS 544.65 / FGSC A1164 / JCM 1740 / NRRL 181 / WB 181) (Aspergillus fischerianus).